The chain runs to 216 residues: UPF0502 protein Ent638_1581 (216 aa).

It belongs to the UPF0502 family.

The polypeptide is UPF0502 protein Ent638_1581 (Enterobacter sp. (strain 638)).